The following is a 304-amino-acid chain: Acetyl-coenzyme A carboxylase carboxyl transferase subunit beta (304 aa).

The CoA carboxyltransferase N-terminal domain occupies 23–292 (VWTKCDSCGQ…PNPEAPREGV (270 aa)). Zn(2+) is bound by residues Cys27, Cys30, Cys46, and Cys49. The C4-type zinc finger occupies 27–49 (CDSCGQVLYRAELERNLEVCPKC). The tract at residues 284–304 (NPEAPREGVVVPPVPDQEPEA) is disordered. The segment covering 295–304 (PPVPDQEPEA) has biased composition (pro residues).

The protein belongs to the AccD/PCCB family. As to quaternary structure, acetyl-CoA carboxylase is a heterohexamer composed of biotin carboxyl carrier protein (AccB), biotin carboxylase (AccC) and two subunits each of ACCase subunit alpha (AccA) and ACCase subunit beta (AccD). The cofactor is Zn(2+).

The protein resides in the cytoplasm. The catalysed reaction is N(6)-carboxybiotinyl-L-lysyl-[protein] + acetyl-CoA = N(6)-biotinyl-L-lysyl-[protein] + malonyl-CoA. The protein operates within lipid metabolism; malonyl-CoA biosynthesis; malonyl-CoA from acetyl-CoA: step 1/1. Its function is as follows. Component of the acetyl coenzyme A carboxylase (ACC) complex. Biotin carboxylase (BC) catalyzes the carboxylation of biotin on its carrier protein (BCCP) and then the CO(2) group is transferred by the transcarboxylase to acetyl-CoA to form malonyl-CoA. The sequence is that of Acetyl-coenzyme A carboxylase carboxyl transferase subunit beta from Escherichia coli O139:H28 (strain E24377A / ETEC).